The chain runs to 66 residues: Large ribosomal subunit protein bL32 (66 aa).

Residues 1–18 (MAIVPKRKTSKQRKHKRR) show a composition bias toward basic residues. Residues 1 to 21 (MAIVPKRKTSKQRKHKRRTND) form a disordered region.

It belongs to the bacterial ribosomal protein bL32 family.

This Mycoplasmopsis agalactiae (strain NCTC 10123 / CIP 59.7 / PG2) (Mycoplasma agalactiae) protein is Large ribosomal subunit protein bL32.